Here is a 91-residue protein sequence, read N- to C-terminus: Probable Fe(2+)-trafficking protein (91 aa).

This sequence belongs to the Fe(2+)-trafficking protein family. In terms of assembly, monomer.

Its function is as follows. Could be a mediator in iron transactions between iron acquisition and iron-requiring processes, such as synthesis and/or repair of Fe-S clusters in biosynthetic enzymes. This Klebsiella pneumoniae subsp. pneumoniae (strain ATCC 700721 / MGH 78578) protein is Probable Fe(2+)-trafficking protein.